A 322-amino-acid polypeptide reads, in one-letter code: tRNA uridine(34) hydroxylase (322 aa).

The region spanning 125-219 is the Rhodanese domain; sequence QSPDTVVIDA…YGKDPEVQGK (95 aa). Residue Cys179 is the Cysteine persulfide intermediate of the active site.

This sequence belongs to the TrhO family.

The enzyme catalyses uridine(34) in tRNA + AH2 + O2 = 5-hydroxyuridine(34) in tRNA + A + H2O. Catalyzes oxygen-dependent 5-hydroxyuridine (ho5U) modification at position 34 in tRNAs. This Bacillus pumilus (strain SAFR-032) protein is tRNA uridine(34) hydroxylase.